Reading from the N-terminus, the 403-residue chain is Phosphoglycerate kinase (403 aa).

Substrate contacts are provided by residues 24-26, arginine 39, 62-65, arginine 121, and arginine 161; these read DLN and HLGR. Residues lysine 211, glycine 299, glutamate 330, and 359 to 362 contribute to the ATP site; that span reads GGDS.

It belongs to the phosphoglycerate kinase family. Monomer.

The protein localises to the cytoplasm. It catalyses the reaction (2R)-3-phosphoglycerate + ATP = (2R)-3-phospho-glyceroyl phosphate + ADP. It functions in the pathway carbohydrate degradation; glycolysis; pyruvate from D-glyceraldehyde 3-phosphate: step 2/5. This Rhodococcus jostii (strain RHA1) protein is Phosphoglycerate kinase.